Here is a 652-residue protein sequence, read N- to C-terminus: MSSYVGVLVSDPWLQSQFTQVELRTLKSKFYSTKTRFGRVTVKHLPPVFAKLKYFNGKFDENEIKTILDESYPNRAKEVEFETFLRAFLSVQSRGSKGASSFLKTSTTTFHHSINESEKASYVSHINSYLKDEPNLKSYLPINPTTNALFDLVKDGVLLCKLINIAVPGTIDERAINTKKELNPWERTENLSLCLNSAKAIGCTVVNIGTQDIAEGTPHLVLGLIFQIIKIQLLADLNLKKTPQLVELVEENQDVEELMGLAPEKLLLKWMNFHLKKAGYEKQVTNFSSDVKDGEAYAYLLNALAPEHSTNVTLEIKDPSERATKVLEQAEKLDCKRFLSPKDIVEGSANLNLAFVAQLFHHRNGLSDESPKVPISVAEMVTEDEETSREERCFRHWMNSLGAVTYVDNVFEDVRNGWVLLEVLDKVSPGSVNWKHANKPPIKMPFKKVENCNQVIKIGKELNFSLVNVAGHDIMQGNKKLLLAFLWQLMRYTMLQILNNLRSHCQGKDITEADILNWANRKVKKSGRTSQAVSFKDKNLANGIFFLELLSAVEPRVVNWSLVSKGETQEEKNLNATYIISVARKLGCSIFLLPEDILEVNQRMMLILAASIMNWSLQQQSDTESTVSDDTDVSSVTEEISNLSTDDGSSDV.

Calponin-homology (CH) domains are found at residues glutamate 116–leucine 233, leucine 261–asparagine 364, serine 388–methionine 494, and aspartate 509–leucine 617. Actin-binding stretches follow at residues glutamate 116 to asparagine 364 and serine 388 to leucine 617. Positions threonine 623–valine 652 are disordered. The span at isoleucine 640–valine 652 shows a compositional bias: polar residues.

In terms of assembly, interacts with F-actin.

It is found in the cytoplasm. Its subcellular location is the cytoskeleton. Its function is as follows. Cross-links actin filaments (F-actin). Stabilizes and prevents F-actin depolymerization mediated by profilin. May regulate actin cytoarchitecture, cell cycle, cell division, cell elongation and cytoplasmic tractus. The polypeptide is Fimbrin-4 (Arabidopsis thaliana (Mouse-ear cress)).